A 545-amino-acid chain; its full sequence is Cannabidiolic acid synthase-like 1 (545 aa).

Positions 1-28 are cleaved as a signal peptide; sequence MKCSTFCFWYVCKIIFFFLSFNIQISIA. Cysteine 37 and cysteine 99 form a disulfide bridge. N-linked (GlcNAc...) asparagine glycans are attached at residues asparagine 45, asparagine 65, asparagine 89, and asparagine 168. The region spanning 77 to 251 is the FAD-binding PCMH-type domain; the sequence is TTPKPLVIIT…AAWKIRLVAV (175 aa). Positions 114–176 form a cross-link, 6-(S-cysteinyl)-8alpha-(pros-histidyl)-FAD (His-Cys); the sequence is HDAEGMSYIS…ENLSFPAGYC (63 aa). Histidine 292 is a substrate binding site. N-linked (GlcNAc...) asparagine glycosylation is found at asparagine 297, asparagine 305, asparagine 329, and asparagine 361. Substrate is bound at residue tyrosine 417. A glycan (N-linked (GlcNAc...) asparagine) is linked at asparagine 467. The Proton acceptor role is filled by tyrosine 484. N-linked (GlcNAc...) asparagine glycosylation is present at asparagine 499.

It belongs to the oxygen-dependent FAD-linked oxidoreductase family. It depends on FAD as a cofactor. In terms of processing, the FAD cofactor is bound via a bicovalent 6-S-cysteinyl, 8alpha-N1-histidyl FAD linkage.

Its subcellular location is the secreted. In terms of biological role, has no cannabidiolic acid synthase activity. In Cannabis sativa (Hemp), this protein is Cannabidiolic acid synthase-like 1 (CBDAS2).